Reading from the N-terminus, the 123-residue chain is MSIIGVGIDVAEVERFGAALERTPALAGRLFLESELLLPGGERRGVASLAARFAAKEALAKALGAPAGLLWTDAEVWVEAGGRPRLRVTGTVAARAAELGVASWHVSLSHDAGIASAVVIAEG.

The Mg(2+) site is built by D9 and E57.

This sequence belongs to the P-Pant transferase superfamily. AcpS family. Mg(2+) is required as a cofactor.

It is found in the cytoplasm. It catalyses the reaction apo-[ACP] + CoA = holo-[ACP] + adenosine 3',5'-bisphosphate + H(+). Functionally, transfers the 4'-phosphopantetheine moiety from coenzyme A to a Ser of acyl-carrier-protein. The chain is Holo-[acyl-carrier-protein] synthase from Streptomyces coelicolor (strain ATCC BAA-471 / A3(2) / M145).